The following is a 361-amino-acid chain: MGEIKRIGILTSGGDCAGLNAVIRSVVHHAIGTYGWEVIGIQEATQGLMENPSKAIALHRDNIDHLLMMGGTFLGTTNKGNPFAFPMADGTVRDRTEDIIAGYRQLGLDALIGIGGDGSLAILRRIAQQGGINLVGIPKTIDNDVGATEISIGFDTATNIATEALDRLHFTAASHNRVMVLEVMGRDAGHIALAAGIGGGADIILIPEIPYRIQSVCNKIRQRQAEGKNFCLVMVSEAVRTELGDQVKQIQQFGEDRYGGIGKYIAEQIAQRTGAETRVTVLGHIQRGGIPSPFDRLLGSVFGVAAVDLIAEGKFDHMVAWRNRQTISVPIEEAIQTYQTVQLDGTLVKTARGLGICLGND.

ATP-binding positions include Gly-14, 79 to 80 (KG), and 116 to 119 (GDGS). Asp-117 lines the Mg(2+) pocket. Residues 140–142 (TID), Arg-177, 184–186 (MGR), Glu-237, Arg-278, and 284–287 (HIQR) contribute to the substrate site. Residue Asp-142 is the Proton acceptor of the active site.

It belongs to the phosphofructokinase type A (PFKA) family. Mixed-substrate PFK group III subfamily. As to quaternary structure, homodimer or homotetramer. Mg(2+) serves as cofactor.

It localises to the cytoplasm. The catalysed reaction is beta-D-fructose 6-phosphate + ATP = beta-D-fructose 1,6-bisphosphate + ADP + H(+). The protein operates within carbohydrate degradation; glycolysis; D-glyceraldehyde 3-phosphate and glycerone phosphate from D-glucose: step 3/4. In terms of biological role, catalyzes the phosphorylation of D-fructose 6-phosphate to fructose 1,6-bisphosphate by ATP, the first committing step of glycolysis. The polypeptide is ATP-dependent 6-phosphofructokinase 1 (Synechocystis sp. (strain ATCC 27184 / PCC 6803 / Kazusa)).